The following is a 405-amino-acid chain: Mevalonate 3,5-bisphosphate decarboxylase (405 aa).

This sequence belongs to the mevalonate 3,5-bisphosphate decarboxylase family. As to quaternary structure, homodimer.

The enzyme catalyses (R)-3,5-bisphosphomevalonate + H(+) = isopentenyl phosphate + phosphate + CO2. It functions in the pathway isoprenoid biosynthesis; isopentenyl diphosphate biosynthesis via mevalonate pathway. Functionally, catalyzes the ATP-independent decarboxylation of (R)-mevalonate 3,5-bisphosphate to isopentenyl phosphate. Functions in an alternative mevalonate pathway, only present in extreme acidophiles of the Thermoplasmatales order, which passes through mevalonate 3-phosphate rather than mevalonate 5-phosphate. The polypeptide is Mevalonate 3,5-bisphosphate decarboxylase (Thermoplasma acidophilum (strain ATCC 25905 / DSM 1728 / JCM 9062 / NBRC 15155 / AMRC-C165)).